The following is a 340-amino-acid chain: Protein SSUH2 homolog (340 aa).

Residues 1-11 (MDRDPSEEDSM) show a composition bias toward acidic residues. Positions 1–20 (MDRDPSEEDSMADLSFEAES) are disordered.

As to expression, widely expressed, with highest levels in the liver, intestine, tongue and underjaw.

The protein localises to the cytoplasm. It localises to the nucleus. Its function is as follows. Plays a role in odontogenesis. This is Protein SSUH2 homolog from Mus musculus (Mouse).